Reading from the N-terminus, the 190-residue chain is MAGERERGGRDRGPREERDSEFVDKLVHINRVAKVVKGGKRFGFAALVVIGDQKGRVGFGHGKAREVPEAIRKATESAKRNLTRVPLREGRTLHHDIAGRHGAGRVYLRAAPAGTGIIAGGPMRAVFETLGIQDVVAKSIGSSNPYNMVRATFDALKHQDSPRSVAARRNIKVSTLQSRRVGGDAEVVAE.

The S5 DRBM domain maps to 22–85; it reads FVDKLVHINR…ESAKRNLTRV (64 aa).

Belongs to the universal ribosomal protein uS5 family. As to quaternary structure, part of the 30S ribosomal subunit. Contacts proteins S4 and S8.

Its function is as follows. With S4 and S12 plays an important role in translational accuracy. In terms of biological role, located at the back of the 30S subunit body where it stabilizes the conformation of the head with respect to the body. The polypeptide is Small ribosomal subunit protein uS5 (Rhodopseudomonas palustris (strain BisA53)).